A 55-amino-acid polypeptide reads, in one-letter code: Large ribosomal subunit protein bL33 (55 aa).

The protein belongs to the bacterial ribosomal protein bL33 family.

The polypeptide is Large ribosomal subunit protein bL33 (Burkholderia cenocepacia (strain ATCC BAA-245 / DSM 16553 / LMG 16656 / NCTC 13227 / J2315 / CF5610) (Burkholderia cepacia (strain J2315))).